Reading from the N-terminus, the 252-residue chain is Thiamine thiazole synthase (252 aa).

Residues Ser-35, 54–55, Gly-62, Val-126, and 152–154 contribute to the NAD(+) site; these read EK and HVD. Fe cation is bound by residues Asp-154 and His-169. Residue Met-217 participates in NAD(+) binding. Residue Arg-227 coordinates glycine.

Belongs to the THI4 family. Homooctamer; tetramer of dimers. Requires Fe(2+) as cofactor.

It carries out the reaction hydrogen sulfide + glycine + NAD(+) = ADP-5-ethyl-4-methylthiazole-2-carboxylate + nicotinamide + 3 H2O + H(+). Its pathway is cofactor biosynthesis; thiamine diphosphate biosynthesis. Involved in the biosynthesis of the thiazole moiety of thiamine. Catalyzes the conversion of NAD and glycine to adenosine diphosphate 5-(2-hydroxyethyl)-4-methylthiazole-2-carboxylate (ADT), an adenylated thiazole intermediate, using free sulfide as a source of sulfur. The sequence is that of Thiamine thiazole synthase from Pyrococcus horikoshii (strain ATCC 700860 / DSM 12428 / JCM 9974 / NBRC 100139 / OT-3).